Consider the following 116-residue polypeptide: Protein Rev (116 aa).

2 positions are modified to phosphoserine; by host CK2: serine 5 and serine 8. Residues 18–26 (LIKLLYQSN) are homomultimerization. A disordered region spans residues 21–49 (LLYQSNPPPNPEGTRQARRNRRRRWRERQ). Positions 34-50 (TRQARRNRRRRWRERQR) match the Nuclear localization signal and RNA-binding (RRE) motif. The span at 36 to 47 (QARRNRRRRWRE) shows a compositional bias: basic residues. Positions 73–84 (LQLPPLERLTLD) match the Nuclear export signal and binding to XPO1 motif. Residues serine 92 and serine 99 each carry the phosphoserine; by host modification. The tract at residues 92 to 116 (SGTQGVGSPQILVESPTVLESGTKE) is disordered.

This sequence belongs to the HIV-1 REV protein family. In terms of assembly, homomultimer; when bound to the RRE. Multimeric assembly is essential for activity and may involve XPO1. Binds to human KPNB1, XPO1, TNPO1, RANBP5 and IPO7. Interacts with the viral Integrase. Interacts with human KHDRBS1. Interacts with human NAP1; this interaction decreases Rev multimerization and stimulates its activity. Interacts with human DEAD-box helicases DDX3 and DDX24; these interactions may serve for viral RNA export to the cytoplasm and packaging, respectively. Interacts with human PSIP1; this interaction may inhibit HIV-1 DNA integration by promoting dissociation of the Integrase-LEDGF/p75 complex. Post-translationally, asymmetrically arginine dimethylated at one site by host PRMT6. Methylation impairs the RNA-binding activity and export of viral RNA from the nucleus to the cytoplasm. Phosphorylated by protein kinase CK2. Presence of, and maybe binding to the N-terminus of the regulatory beta subunit of CK2 is necessary for CK2-mediated Rev's phosphorylation.

It localises to the host nucleus. Its subcellular location is the host nucleolus. The protein localises to the host cytoplasm. In terms of biological role, escorts unspliced or incompletely spliced viral pre-mRNAs (late transcripts) out of the nucleus of infected cells. These pre-mRNAs carry a recognition sequence called Rev responsive element (RRE) located in the env gene, that is not present in fully spliced viral mRNAs (early transcripts). This function is essential since most viral proteins are translated from unspliced or partially spliced pre-mRNAs which cannot exit the nucleus by the pathway used by fully processed cellular mRNAs. Rev itself is translated from a fully spliced mRNA that readily exits the nucleus. Rev's nuclear localization signal (NLS) binds directly to KPNB1/Importin beta-1 without previous binding to KPNA1/Importin alpha-1. KPNB1 binds to the GDP bound form of RAN (Ran-GDP) and targets Rev to the nucleus. In the nucleus, the conversion from Ran-GDP to Ran-GTP dissociates Rev from KPNB1 and allows Rev's binding to the RRE in viral pre-mRNAs. Rev multimerization on the RRE via cooperative assembly exposes its nuclear export signal (NES) to the surface. Rev can then form a complex with XPO1/CRM1 and Ran-GTP, leading to nuclear export of the complex. Conversion from Ran-GTP to Ran-GDP mediates dissociation of the Rev/RRE/XPO1/RAN complex, so that Rev can return to the nucleus for a subsequent round of export. Beside KPNB1, also seems to interact with TNPO1/Transportin-1, RANBP5/IPO5 and IPO7/RANBP7 for nuclear import. The nucleoporin-like HRB/RIP is an essential cofactor that probably indirectly interacts with Rev to release HIV RNAs from the perinuclear region to the cytoplasm. The polypeptide is Protein Rev (Homo sapiens (Human)).